The chain runs to 44 residues: MESPAFFFTIFLWCLLLSVTGYSVYVGFGPPSKDLRDPFDEHED.

A helical transmembrane segment spans residues 6–26 (FFFTIFLWCLLLSVTGYSVYV).

The protein belongs to the PsbN family.

It is found in the plastid. Its subcellular location is the chloroplast thylakoid membrane. May play a role in photosystem I and II biogenesis. The chain is Protein PsbN from Oltmannsiellopsis viridis (Marine flagellate).